Here is a 90-residue protein sequence, read N- to C-terminus: Cell division topological specificity factor (90 aa).

The segment at 1-21 is disordered; that stretch reads MAGFWSKIFGNDEKPSSAQTA. Residues 10 to 21 are compositionally biased toward basic and acidic residues; sequence GNDEKPSSAQTA.

Belongs to the MinE family.

Functionally, prevents the cell division inhibition by proteins MinC and MinD at internal division sites while permitting inhibition at polar sites. This ensures cell division at the proper site by restricting the formation of a division septum at the midpoint of the long axis of the cell. In Acinetobacter baylyi (strain ATCC 33305 / BD413 / ADP1), this protein is Cell division topological specificity factor.